The primary structure comprises 118 residues: uncharacterized protein (118 aa).

A helical transmembrane segment spans residues 7–27 (LLTGLFVGGIIGGAAVLLTAP). Residues 31–118 (KQLREKMKTN…IRQLEKTLQN (88 aa)) are a coiled coil.

Its subcellular location is the cell membrane. This is an uncharacterized protein from Bacillus subtilis (strain 168).